A 669-amino-acid polypeptide reads, in one-letter code: DNA ligase 2 (669 aa).

Residues 35–39 (DKEYD) and 83–84 (SL) contribute to the NAD(+) site. Catalysis depends on K125, which acts as the N6-AMP-lysine intermediate. NAD(+) is bound by residues R147, E181, and K317. C410, C413, C426, and C432 together coordinate Zn(2+). The region spanning 590–669 (VVENAFTGKT…EEFEQLINNM (80 aa)) is the BRCT domain.

The protein belongs to the NAD-dependent DNA ligase family. LigA subfamily. Mg(2+) serves as cofactor. Mn(2+) is required as a cofactor.

It catalyses the reaction NAD(+) + (deoxyribonucleotide)n-3'-hydroxyl + 5'-phospho-(deoxyribonucleotide)m = (deoxyribonucleotide)n+m + AMP + beta-nicotinamide D-nucleotide.. In terms of biological role, DNA ligase that catalyzes the formation of phosphodiester linkages between 5'-phosphoryl and 3'-hydroxyl groups in double-stranded DNA using NAD as a coenzyme and as the energy source for the reaction. It is essential for DNA replication and repair of damaged DNA. The polypeptide is DNA ligase 2 (Clostridium acetobutylicum (strain ATCC 824 / DSM 792 / JCM 1419 / IAM 19013 / LMG 5710 / NBRC 13948 / NRRL B-527 / VKM B-1787 / 2291 / W)).